The sequence spans 234 residues: Uridylate kinase (234 aa).

Residue 10–11 coordinates ATP; the sequence is GS. UMP is bound at residue Gly-44. ATP contacts are provided by Gly-45 and Arg-49. UMP is bound by residues Asp-66 and 114-120; that span reads ITPAQTT. Residues Thr-140, Tyr-146, and Asp-149 each contribute to the ATP site.

It belongs to the UMP kinase family. In terms of assembly, homohexamer.

It is found in the cytoplasm. It catalyses the reaction UMP + ATP = UDP + ADP. It participates in pyrimidine metabolism; CTP biosynthesis via de novo pathway; UDP from UMP (UMPK route): step 1/1. Inhibited by UTP. Its function is as follows. Catalyzes the reversible phosphorylation of UMP to UDP. This chain is Uridylate kinase, found in Methanoculleus marisnigri (strain ATCC 35101 / DSM 1498 / JR1).